A 112-amino-acid polypeptide reads, in one-letter code: Elongin-C (112 aa).

It belongs to the SKP1 family. Heterotrimer of an A (ELOA, ELOA2 or ELOA3P), ELOB and ELOC subunit. The elongin BC complex interacts with EPOP; leading to recruit the elongin BC complex to Polycomb group (PcG) target genes, thereby restricting excessive activity of the PRC2/EED-EZH2 complex. Component of multiple cullin-RING E3 ubiquitin-protein ligase complexes composed of Elongin BC (ELOB and ELOC), a cullin (CUL2 or CUL5), a catalytic subunit (RBX1 or RNF7/RBX2), as well as a substrate adapter protein that can be either ASB2, ASB9, ASB11, KLHDC2, KLHDC3, KLHDC10, APPBP2, FEM1A, FEM1B, FEM1C, LRR1, PCMTD1, SOCS1, SOCS2, SOCS5, SPSB1, SPSB3, ELOA, VHL, WSB1, ZYG11B or RAB40C. Interacts with TMF1. As part of the Elongin BC E3 ubiquitin ligase complex; interacts with NRBP1. May form oligomers as a KLHDC2/KLHDC3-ELOB-ELOC complex; this interaction is autoinhibitory for the E3 ligase complex as the substrate-binding site of KLHDC2/KLHDC3 is blocked in the oligomer. In terms of processing, ubiquitinated by the DCX(AMBRA1) complex, leading to its degradation by the proteasome.

It is found in the nucleus. Its pathway is protein modification; protein ubiquitination. Functionally, SIII, also known as elongin, is a general transcription elongation factor that increases the RNA polymerase II transcription elongation past template-encoded arresting sites. Subunit A is transcriptionally active and its transcription activity is strongly enhanced by binding to the dimeric complex of the SIII regulatory subunits B and C (elongin BC complex). In embryonic stem cells, the elongin BC complex is recruited by EPOP to Polycomb group (PcG) target genes in order generate genomic region that display both active and repressive chromatin properties, an important feature of pluripotent stem cells. In terms of biological role, core component of multiple cullin-RING-based ECS (ElonginB/C-CUL2/5-SOCS-box protein) E3 ubiquitin-protein ligase complexes, which mediate the ubiquitination of target proteins. By binding to BC-box motifs it seems to link target recruitment subunits, like VHL and members of the SOCS box family, to Cullin/RBX1 modules that activate E2 ubiquitination enzymes. Component the von Hippel-Lindau ubiquitination complex CBC(VHL). A number of ECS complexes (containing either KLHDC2, KLHDC3, KLHDC10, APPBP2, FEM1A, FEM1B or FEM1C as substrate-recognition component) are part of the DesCEND (destruction via C-end degrons) pathway, which recognizes a C-degron located at the extreme C terminus of target proteins, leading to their ubiquitination and degradation. The ECS(ASB9) complex mediates ubiquitination and degradation of CKB. As part of a multisubunit ubiquitin ligase complex, polyubiquitinates monoubiquitinated POLR2A. ECS(LRR1) ubiquitinates MCM7 and promotes CMG replisome disassembly by VCP and chromatin extraction during S-phase. As part of the ECS(RAB40C) complex, mediates ANKRD28 ubiquitination and degradation, thereby inhibiting protein phosphatase 6 (PP6) complex activity and focal adhesion assembly during cell migration. This Bos taurus (Bovine) protein is Elongin-C (ELOC).